Consider the following 430-residue polypeptide: Adenylosuccinate synthetase (430 aa).

Residues 12-18 (GDEGKGK) and 40-42 (GHT) contribute to the GTP site. The active-site Proton acceptor is the D13. Residues D13 and G40 each coordinate Mg(2+). IMP is bound by residues 13–16 (DEGK), 38–41 (NAGH), T130, R144, Q224, T239, and R303. Catalysis depends on H41, which acts as the Proton donor. Position 299-305 (299-305 (ATTGRPR)) interacts with substrate. GTP is bound by residues R305, 331 to 333 (KLD), and 413 to 415 (SVG).

The protein belongs to the adenylosuccinate synthetase family. In terms of assembly, homodimer. Mg(2+) is required as a cofactor.

It is found in the cytoplasm. The catalysed reaction is IMP + L-aspartate + GTP = N(6)-(1,2-dicarboxyethyl)-AMP + GDP + phosphate + 2 H(+). It participates in purine metabolism; AMP biosynthesis via de novo pathway; AMP from IMP: step 1/2. In terms of biological role, plays an important role in the de novo pathway of purine nucleotide biosynthesis. Catalyzes the first committed step in the biosynthesis of AMP from IMP. The polypeptide is Adenylosuccinate synthetase (Trichlorobacter lovleyi (strain ATCC BAA-1151 / DSM 17278 / SZ) (Geobacter lovleyi)).